We begin with the raw amino-acid sequence, 423 residues long: UPF0229 protein PFLU_5583 (423 aa).

Residues 64 to 109 form a disordered region; that stretch reads LHHGRGGKQTVVHPGNKEFTTGEHIQRPQGGGGGKGPGKAGNSGEG. Residues 92 to 107 show a composition bias toward gly residues; it reads QGGGGGKGPGKAGNSG.

It belongs to the UPF0229 family.

This chain is UPF0229 protein PFLU_5583, found in Pseudomonas fluorescens (strain SBW25).